The chain runs to 318 residues: Acetaldehyde dehydrogenase 2 (318 aa).

9-12 (SGNI) contacts NAD(+). C129 (acyl-thioester intermediate) is an active-site residue. Residues 160–168 (SAGPGTRAN) and N288 contribute to the NAD(+) site.

It belongs to the acetaldehyde dehydrogenase family.

It catalyses the reaction acetaldehyde + NAD(+) + CoA = acetyl-CoA + NADH + H(+). This Mycolicibacterium vanbaalenii (strain DSM 7251 / JCM 13017 / BCRC 16820 / KCTC 9966 / NRRL B-24157 / PYR-1) (Mycobacterium vanbaalenii) protein is Acetaldehyde dehydrogenase 2.